A 371-amino-acid chain; its full sequence is MPAAAAAAAPPNPNVLQLAPRLRGLVSFPSSYSSSSPFSNRLRLRLPRAASMSAEARVPVAPPAHPTYDLKAVINLALSEDAGDRGDVSCLATIPSDVKAEATFIAKEDGVVAGISLADMIFKQVDPSLKVEWFESDGNYVHKGLQFGRVYGCARNIIVAERVVLNFMQRMSGIATMTKAMADAAHPACILETRKTAPGLRLVDKWAVLIGGGKNHRIGLFDMVMIKDNHISVAGGITNAMKFVDRFLAKEKLALPVEVETRTLQEVKDLLEYAAENNTSLTRIMLDNMVVPLGNGDIDVSMLKDAVELINGRFETEASGNVTIDTVKKIGETGVTYISSGALTHSVKALDISLKIDTELALQVGRRTNRA.

A chloroplast-targeting transit peptide spans 1–48; sequence MPAAAAAAAPPNPNVLQLAPRLRGLVSFPSSYSSSSPFSNRLRLRLPR. Substrate-binding positions include Arg162, 193–195, Arg217, Lys227, Glu260, Asp287, 319–321, and 340–342; these read TRK, SGN, and SGA.

It belongs to the NadC/ModD family.

The protein resides in the plastid. It is found in the chloroplast. It catalyses the reaction nicotinate beta-D-ribonucleotide + CO2 + diphosphate = quinolinate + 5-phospho-alpha-D-ribose 1-diphosphate + 2 H(+). Its pathway is cofactor biosynthesis; NAD(+) biosynthesis; nicotinate D-ribonucleotide from quinolinate: step 1/1. Functionally, involved in the catabolism of quinolinic acid (QA). This chain is Nicotinate-nucleotide pyrophosphorylase [carboxylating], chloroplastic, found in Oryza sativa subsp. japonica (Rice).